A 48-amino-acid chain; its full sequence is MPVQLGVQHYFSAHWGIDATATVSFGIDTKLAKFRIPYTLRFGPVFRT.

This is an uncharacterized protein from Treponema pallidum (strain Nichols).